A 152-amino-acid polypeptide reads, in one-letter code: Transcriptional repressor NrdR (152 aa).

The span at 1–10 (MKCPSCQHNG) shows a compositional bias: polar residues. The tract at residues 1–21 (MKCPSCQHNGSRVLDSRPADE) is disordered. Residues 3–34 (CPSCQHNGSRVLDSRPADEGKSIRRRRECEAC) fold into a zinc finger. An ATP-cone domain is found at 49–139 (LIVVKKEGVR…VYRQFKDINV (91 aa)).

The protein belongs to the NrdR family. Zn(2+) is required as a cofactor.

In terms of biological role, negatively regulates transcription of bacterial ribonucleotide reductase nrd genes and operons by binding to NrdR-boxes. This is Transcriptional repressor NrdR from Bacillus velezensis (strain DSM 23117 / BGSC 10A6 / LMG 26770 / FZB42) (Bacillus amyloliquefaciens subsp. plantarum).